Reading from the N-terminus, the 153-residue chain is Transcriptional repressor NrdR (153 aa).

A zinc finger spans residues 3-34; that stretch reads CPFCNNINTQVKDSRAIEDDILIRRRRICLVC. Residues 49 to 139 enclose the ATP-cone domain; sequence FMVIKKNGET…VYMNFKNIND (91 aa).

It belongs to the NrdR family. Zn(2+) serves as cofactor.

In terms of biological role, negatively regulates transcription of bacterial ribonucleotide reductase nrd genes and operons by binding to NrdR-boxes. The chain is Transcriptional repressor NrdR from Ehrlichia canis (strain Jake).